Consider the following 141-residue polypeptide: Cystatin (141 aa).

An N-terminal signal peptide occupies residues 1–26 (MVHSQLPVAAPLRLLCALLLLPSATM). The 101-residue stretch at 29–129 (GGISPRSVTD…CHFQVWSRPW (101 aa)) folds into the Cystatin domain. Positions 73–77 (QVVAG) match the Secondary area of contact motif. Disulfide bonds link C91–C107 and C120–C140.

It belongs to the cystatin family. In terms of tissue distribution, expressed by the venom gland at an extremely low level (at protein level).

The protein resides in the secreted. Its function is as follows. Inhibits various C1 cysteine proteases including cathepsin L, papain and cathepsin B. This protein has no toxic activity and its function in the venom is unknown. It may play a role as a housekeeping or regulatory protein. The polypeptide is Cystatin (Oxyuranus microlepidotus (Inland taipan)).